A 346-amino-acid chain; its full sequence is Growth hormone-inducible transmembrane protein (346 aa).

The N-terminal 45 residues, 1–45, are a transit peptide targeting the mitochondrion; the sequence is MLAARLVCLRTLPSRVFQPTFITKASPLVKNSITKNQWLLTPSRE. At 46–83 the chain is on the mitochondrial matrix side; it reads YATKTRIRTHRGKTGQELKEAALEPSLEKVFKIDQMGK. The chain crosses the membrane as a helical span at residues 84–104; that stretch reads WFVAGGAAVGLGALCYYGLGM. Over 105 to 126 the chain is Mitochondrial intermembrane; it reads SNEIGAIEKAVIWPQYVKDRIH. A helical membrane pass occupies residues 127–147; it reads STYMYLAGSIGLTALSALALA. The Mitochondrial matrix segment spans residues 148 to 160; it reads RSPALMNFMMTGS. A helical transmembrane segment spans residues 161–181; it reads WMTIGATFAAMIGAGMLVQSI. Over 182-191 the chain is Mitochondrial intermembrane; the sequence is SYEQSPGPKH. The chain crosses the membrane as a helical span at residues 192 to 212; that stretch reads LAWMLHSGVMGAVVAPLTILG. Over 213-214 the chain is Mitochondrial matrix; sequence GP. Residues 215–235 traverse the membrane as a helical segment; the sequence is LLLRAAWYTAGIVGGLSTVAM. Over 236–245 the chain is Mitochondrial intermembrane; it reads CAPSEKFLNM. A helical transmembrane segment spans residues 246 to 266; that stretch reads GAPLGVGLGLVFASSLGSMFL. Over 267-272 the chain is Mitochondrial matrix; that stretch reads PPTSVA. A helical transmembrane segment spans residues 273 to 293; the sequence is GATLYSVAMYGGLVLFSMFLL. Residues 294–346 lie on the Mitochondrial intermembrane side of the membrane; that stretch reads YDTQKVVKRAEITPAYGAQKYDPINSMLTIYMDTLNIFMRVATMLATGSNRKK.

Belongs to the BI1 family. Interacts with LETM1 and AFG3L2. Undergoes AFG3L2-mediated proteolytic degradation, upon hyperpolarization of mitochondria.

It is found in the mitochondrion inner membrane. Its function is as follows. Plays an important role in maintenance of mitochondrial morphology and in mediating either calcium or potassium/proton antiport. Mediates proton-dependent calcium efflux from mitochondrion. Also functions as an electroneutral mitochondrial proton/potassium exchanger. Required for the mitochondrial tubular network and cristae organization. Involved in apoptotic release of cytochrome c. Inhibits AFG3L2 proteolytic activity, stimulating respiration and stabilizing respiratory enzymes in actively respiring mitochondria. However, when mitochondria become hyperpolarized, GHITM loses its inhibitory activity toward AFG3L2 and the now active AFG3L2 turns first on GHITM and, if hyperpolarization persists, on other proteins of the mitochondria, leading to a broad remodeling of the proteome. The sequence is that of Growth hormone-inducible transmembrane protein (Ghitm) from Rattus norvegicus (Rat).